Reading from the N-terminus, the 208-residue chain is Uracil phosphoribosyltransferase (208 aa).

Residues Arg-78, Arg-103, and 130 to 138 (DPMLATGVS) contribute to the 5-phospho-alpha-D-ribose 1-diphosphate site. Residues Ile-193 and 198–200 (GDA) contribute to the uracil site. Asp-199 contributes to the 5-phospho-alpha-D-ribose 1-diphosphate binding site.

This sequence belongs to the UPRTase family. Mg(2+) serves as cofactor.

The enzyme catalyses UMP + diphosphate = 5-phospho-alpha-D-ribose 1-diphosphate + uracil. It functions in the pathway pyrimidine metabolism; UMP biosynthesis via salvage pathway; UMP from uracil: step 1/1. Allosterically activated by GTP. Functionally, catalyzes the conversion of uracil and 5-phospho-alpha-D-ribose 1-diphosphate (PRPP) to UMP and diphosphate. The polypeptide is Uracil phosphoribosyltransferase (Thermosipho melanesiensis (strain DSM 12029 / CIP 104789 / BI429)).